Consider the following 128-residue polypeptide: Putative esterase aq_1494 (128 aa).

Aspartate 15 is a catalytic residue.

It belongs to the 4-hydroxybenzoyl-CoA thioesterase family.

The protein is Putative esterase aq_1494 of Aquifex aeolicus (strain VF5).